The sequence spans 248 residues: Granzyme-like protein 2 (248 aa).

The N-terminal stretch at 1 to 18 (MFLFLIFLVAVLPVNTEG) is a signal peptide. Residues 19-20 (GE) constitute a propeptide, activation peptide. One can recognise a Peptidase S1 domain in the interval 21 to 243 (IVWGTESKPH…FIPWIQKTMK (223 aa)). A disulfide bridge connects residues cysteine 50 and cysteine 66. Active-site charge relay system residues include histidine 65 and aspartate 108. Intrachain disulfides connect cysteine 142–cysteine 207 and cysteine 172–cysteine 186. 2 N-linked (GlcNAc...) asparagine glycosylation sites follow: asparagine 152 and asparagine 180. The Charge relay system role is filled by serine 201.

It belongs to the peptidase S1 family. Granzyme subfamily. As to expression, duodenum, lung and spleen.

This enzyme is necessary for target cell lysis in cell-mediated immune responses. This Rattus norvegicus (Rat) protein is Granzyme-like protein 2.